Consider the following 209-residue polypeptide: Phosphopantothenoylcysteine decarboxylase (209 aa).

FMN contacts are provided by residues 28–30 (GSV) and 53–55 (TKS). His90 serves as the catalytic Proton donor. FMN is bound by residues 106–109 (SANT) and Ala140. N-[(R)-4-phosphopantothenoyl]-L-cysteine-binding residues include Asn142, Arg172, and Ala174. The Proton donor role is filled by Cys175. Met183 lines the N-[(R)-4-phosphopantothenoyl]-L-cysteine pocket.

The protein belongs to the HFCD (homooligomeric flavin containing Cys decarboxylase) superfamily. As to quaternary structure, homotrimer. The cofactor is FMN. As to expression, expressed in roots, shoots, leaves, flowers, developing siliques and seeds with highest expression in seed embryos and phloem.

It catalyses the reaction N-[(R)-4-phosphopantothenoyl]-L-cysteine + H(+) = (R)-4'-phosphopantetheine + CO2. Its pathway is cofactor biosynthesis; coenzyme A biosynthesis; CoA from (R)-pantothenate: step 3/5. Functionally, involved in plant growth, and salt and osmotic tolerance. Catalyzes the decarboxylation of 4'-phosphopantothenoylcysteine to 4'-phosphopantetheine, a key step in coenzyme A biosynthesis. The enzyme is also able to decarboxylate pantothenoylcysteine to pantothenoylcysteamine. This Arabidopsis thaliana (Mouse-ear cress) protein is Phosphopantothenoylcysteine decarboxylase.